Consider the following 283-residue polypeptide: Polyamine aminopropyltransferase (283 aa).

Residues 5–238 form the PABS domain; the sequence is TTWIDEYQKG…GIWSWTFASK (234 aa). Residue Gln32 coordinates S-methyl-5'-thioadenosine. Positions 63 and 87 each coordinate spermidine. S-methyl-5'-thioadenosine-binding positions include Glu107 and 139–140; that span reads DG. Asp158 functions as the Proton acceptor in the catalytic mechanism. 158 to 161 contacts spermidine; sequence DCSD.

It belongs to the spermidine/spermine synthase family. As to quaternary structure, homodimer or homotetramer.

It localises to the cytoplasm. It catalyses the reaction S-adenosyl 3-(methylsulfanyl)propylamine + putrescine = S-methyl-5'-thioadenosine + spermidine + H(+). It functions in the pathway amine and polyamine biosynthesis; spermidine biosynthesis; spermidine from putrescine: step 1/1. Catalyzes the irreversible transfer of a propylamine group from the amino donor S-adenosylmethioninamine (decarboxy-AdoMet) to putrescine (1,4-diaminobutane) to yield spermidine. This is Polyamine aminopropyltransferase from Prochlorococcus marinus (strain MIT 9515).